The sequence spans 228 residues: 7-cyano-7-deazaguanine synthase (228 aa).

8-18 (LSGGLDSTTCL) lines the ATP pocket. Zn(2+)-binding residues include C188, C198, C201, and C204.

Belongs to the QueC family. Zn(2+) is required as a cofactor.

It catalyses the reaction 7-carboxy-7-deazaguanine + NH4(+) + ATP = 7-cyano-7-deazaguanine + ADP + phosphate + H2O + H(+). Its pathway is purine metabolism; 7-cyano-7-deazaguanine biosynthesis. Functionally, catalyzes the ATP-dependent conversion of 7-carboxy-7-deazaguanine (CDG) to 7-cyano-7-deazaguanine (preQ(0)). This is 7-cyano-7-deazaguanine synthase from Legionella pneumophila (strain Paris).